The following is a 168-amino-acid chain: Ribosome maturation factor RimP (168 aa).

It belongs to the RimP family.

Its subcellular location is the cytoplasm. Its function is as follows. Required for maturation of 30S ribosomal subunits. The chain is Ribosome maturation factor RimP from Syntrophobacter fumaroxidans (strain DSM 10017 / MPOB).